A 352-amino-acid chain; its full sequence is Photosystem II D2 protein (352 aa).

N-acetylthreonine is present on threonine 2. Threonine 2 bears the Phosphothreonine mark. A helical transmembrane segment spans residues 40–60 (TAYLALGGWLTGTTFVTSWYT). Histidine 117 contributes to the chlorophyll a binding site. The helical transmembrane segment at 124–140 (GFMLRQFEIARSVKLRP) threads the bilayer. Pheophytin a contacts are provided by glutamine 129 and asparagine 142. The helical transmembrane segment at 152 to 165 (VFVSVFLIYPLGQS) threads the bilayer. Histidine 197 contacts chlorophyll a. The helical transmembrane segment at 207–227 (AALLCAIHGATVENTLFEDGD) threads the bilayer. A plastoquinone is bound by residues histidine 214 and phenylalanine 261. Histidine 214 contacts Fe cation. Residue histidine 268 coordinates Fe cation. A helical membrane pass occupies residues 278–294 (GLWMSALGVVGLALNLR).

Belongs to the reaction center PufL/M/PsbA/D family. As to quaternary structure, PSII is composed of 1 copy each of membrane proteins PsbA, PsbB, PsbC, PsbD, PsbE, PsbF, PsbH, PsbI, PsbJ, PsbK, PsbL, PsbM, PsbT, PsbX, PsbY, PsbZ, Psb30/Ycf12, at least 3 peripheral proteins of the oxygen-evolving complex and a large number of cofactors. It forms dimeric complexes. Requires The D1/D2 heterodimer binds P680, chlorophylls that are the primary electron donor of PSII, and subsequent electron acceptors. It shares a non-heme iron and each subunit binds pheophytin, quinone, additional chlorophylls, carotenoids and lipids. There is also a Cl(-1) ion associated with D1 and D2, which is required for oxygen evolution. The PSII complex binds additional chlorophylls, carotenoids and specific lipids. as cofactor.

The protein localises to the plastid. It is found in the chloroplast thylakoid membrane. The enzyme catalyses 2 a plastoquinone + 4 hnu + 2 H2O = 2 a plastoquinol + O2. Its function is as follows. Photosystem II (PSII) is a light-driven water:plastoquinone oxidoreductase that uses light energy to abstract electrons from H(2)O, generating O(2) and a proton gradient subsequently used for ATP formation. It consists of a core antenna complex that captures photons, and an electron transfer chain that converts photonic excitation into a charge separation. The D1/D2 (PsbA/PsbD) reaction center heterodimer binds P680, the primary electron donor of PSII as well as several subsequent electron acceptors. D2 is needed for assembly of a stable PSII complex. This Pleurastrum terricola (Filamentous green alga) protein is Photosystem II D2 protein.